We begin with the raw amino-acid sequence, 679 residues long: Dihydroxyacetone phosphate acyltransferase (679 aa).

Residue S11 is modified to Phosphoserine. Residues 161-166 carry the HXXXXD motif motif; sequence HRSYID. K642 bears the N6-acetyllysine mark.

This sequence belongs to the GPAT/DAPAT family. As to quaternary structure, part of a heterotrimeric complex composed of GNPAT, AGPS and a modified form of GNPAT.

The protein resides in the peroxisome membrane. The catalysed reaction is dihydroxyacetone phosphate + an acyl-CoA = a 1-acylglycerone 3-phosphate + CoA. It catalyses the reaction dihydroxyacetone phosphate + hexadecanoyl-CoA = 1-hexadecanoylglycerone 3-phosphate + CoA. The protein operates within membrane lipid metabolism; glycerophospholipid metabolism. In terms of biological role, dihydroxyacetonephosphate acyltransferase catalyzing the first step in the biosynthesis of plasmalogens, a subset of phospholipids that differ from other glycerolipids by having an alkyl chain attached through a vinyl ether linkage at the sn-1 position of the glycerol backbone, and which unique physical properties have an impact on various aspects of cell signaling and membrane biology. In Oryctolagus cuniculus (Rabbit), this protein is Dihydroxyacetone phosphate acyltransferase.